Here is a 133-residue protein sequence, read N- to C-terminus: Large ribosomal subunit protein bL20 (133 aa).

It belongs to the bacterial ribosomal protein bL20 family.

Functionally, binds directly to 23S ribosomal RNA and is necessary for the in vitro assembly process of the 50S ribosomal subunit. It is not involved in the protein synthesizing functions of that subunit. This Bartonella tribocorum (strain CIP 105476 / IBS 506) protein is Large ribosomal subunit protein bL20.